We begin with the raw amino-acid sequence, 447 residues long: Phosphoglucosamine mutase (447 aa).

The Phosphoserine intermediate role is filled by Ser107. Residues Ser107, Asp246, Asp248, and Asp250 each contribute to the Mg(2+) site. Ser107 is subject to Phosphoserine.

The protein belongs to the phosphohexose mutase family. It depends on Mg(2+) as a cofactor. Activated by phosphorylation.

The catalysed reaction is alpha-D-glucosamine 1-phosphate = D-glucosamine 6-phosphate. Functionally, catalyzes the conversion of glucosamine-6-phosphate to glucosamine-1-phosphate. The protein is Phosphoglucosamine mutase of Ralstonia pickettii (strain 12J).